Reading from the N-terminus, the 239-residue chain is 1-(5-phosphoribosyl)-5-[(5-phosphoribosylamino)methylideneamino] imidazole-4-carboxamide isomerase (239 aa).

Aspartate 8 functions as the Proton acceptor in the catalytic mechanism. Aspartate 129 (proton donor) is an active-site residue.

The protein belongs to the HisA/HisF family.

The protein localises to the cytoplasm. It catalyses the reaction 1-(5-phospho-beta-D-ribosyl)-5-[(5-phospho-beta-D-ribosylamino)methylideneamino]imidazole-4-carboxamide = 5-[(5-phospho-1-deoxy-D-ribulos-1-ylimino)methylamino]-1-(5-phospho-beta-D-ribosyl)imidazole-4-carboxamide. It functions in the pathway amino-acid biosynthesis; L-histidine biosynthesis; L-histidine from 5-phospho-alpha-D-ribose 1-diphosphate: step 4/9. This is 1-(5-phosphoribosyl)-5-[(5-phosphoribosylamino)methylideneamino] imidazole-4-carboxamide isomerase from Bacillus thuringiensis (strain Al Hakam).